Consider the following 185-residue polypeptide: Large ribosomal subunit protein uL5 (185 aa).

Belongs to the universal ribosomal protein uL5 family. In terms of assembly, part of the 50S ribosomal subunit; part of the 5S rRNA/L5/L18/L25 subcomplex. Contacts the 5S rRNA and the P site tRNA. Forms a bridge to the 30S subunit in the 70S ribosome.

Functionally, this is one of the proteins that bind and probably mediate the attachment of the 5S RNA into the large ribosomal subunit, where it forms part of the central protuberance. In the 70S ribosome it contacts protein S13 of the 30S subunit (bridge B1b), connecting the 2 subunits; this bridge is implicated in subunit movement. Contacts the P site tRNA; the 5S rRNA and some of its associated proteins might help stabilize positioning of ribosome-bound tRNAs. This Afipia carboxidovorans (strain ATCC 49405 / DSM 1227 / KCTC 32145 / OM5) (Oligotropha carboxidovorans) protein is Large ribosomal subunit protein uL5.